A 142-amino-acid polypeptide reads, in one-letter code: Large ribosomal subunit protein uL11 (142 aa).

This sequence belongs to the universal ribosomal protein uL11 family. In terms of assembly, part of the ribosomal stalk of the 50S ribosomal subunit. Interacts with L10 and the large rRNA to form the base of the stalk. L10 forms an elongated spine to which L12 dimers bind in a sequential fashion forming a multimeric L10(L12)X complex. In terms of processing, one or more lysine residues are methylated.

Its function is as follows. Forms part of the ribosomal stalk which helps the ribosome interact with GTP-bound translation factors. In Mycobacterium sp. (strain MCS), this protein is Large ribosomal subunit protein uL11.